The following is a 59-amino-acid chain: Protein HOR7 (59 aa).

Residues 1 to 19 (MKLSQVVVSAVAFTGLVSA) form the signal peptide.

The protein to yeast DDR2.

In Saccharomyces cerevisiae (strain ATCC 204508 / S288c) (Baker's yeast), this protein is Protein HOR7 (HOR7).